Consider the following 432-residue polypeptide: 3-phosphoshikimate 1-carboxyvinyltransferase (432 aa).

3-phosphoshikimate is bound by residues Lys-23, Ser-24, and Arg-28. Lys-23 is a binding site for phosphoenolpyruvate. The phosphoenolpyruvate site is built by Gly-95 and Arg-123. Residues Ser-167, Gln-169, Asp-317, and Lys-344 each contribute to the 3-phosphoshikimate site. Gln-169 is a phosphoenolpyruvate binding site. The active-site Proton acceptor is Asp-317. The phosphoenolpyruvate site is built by Arg-348 and Arg-390.

It belongs to the EPSP synthase family. In terms of assembly, monomer.

The protein localises to the cytoplasm. The catalysed reaction is 3-phosphoshikimate + phosphoenolpyruvate = 5-O-(1-carboxyvinyl)-3-phosphoshikimate + phosphate. It functions in the pathway metabolic intermediate biosynthesis; chorismate biosynthesis; chorismate from D-erythrose 4-phosphate and phosphoenolpyruvate: step 6/7. Its function is as follows. Catalyzes the transfer of the enolpyruvyl moiety of phosphoenolpyruvate (PEP) to the 5-hydroxyl of shikimate-3-phosphate (S3P) to produce enolpyruvyl shikimate-3-phosphate and inorganic phosphate. The chain is 3-phosphoshikimate 1-carboxyvinyltransferase from Staphylococcus haemolyticus (strain JCSC1435).